The primary structure comprises 364 residues: Chaperone protein DnaJ (364 aa).

In terms of domain architecture, J spans 4-69 (DYYEILGLSK…NKKAKYDRFG (66 aa)). Residues 135 to 213 (GYKNNINITR…CKGKGRITNQ (79 aa)) form a CR-type zinc finger. Zn(2+) is bound by residues Cys148, Cys151, Cys165, Cys168, Cys187, Cys190, Cys201, and Cys204. CXXCXGXG motif repeat units lie at residues 148–155 (CHSCLGKK), 165–172 (CNMCNGSG), 187–194 (CSKCYGEG), and 201–208 (CKSCKGKG).

The protein belongs to the DnaJ family. In terms of assembly, homodimer. It depends on Zn(2+) as a cofactor.

Its subcellular location is the cytoplasm. Functionally, participates actively in the response to hyperosmotic and heat shock by preventing the aggregation of stress-denatured proteins and by disaggregating proteins, also in an autonomous, DnaK-independent fashion. Unfolded proteins bind initially to DnaJ; upon interaction with the DnaJ-bound protein, DnaK hydrolyzes its bound ATP, resulting in the formation of a stable complex. GrpE releases ADP from DnaK; ATP binding to DnaK triggers the release of the substrate protein, thus completing the reaction cycle. Several rounds of ATP-dependent interactions between DnaJ, DnaK and GrpE are required for fully efficient folding. Also involved, together with DnaK and GrpE, in the DNA replication of plasmids through activation of initiation proteins. The protein is Chaperone protein DnaJ of Borrelia garinii subsp. bavariensis (strain ATCC BAA-2496 / DSM 23469 / PBi) (Borreliella bavariensis).